The following is a 77-amino-acid chain: Acyl carrier protein (77 aa).

One can recognise a Carrier domain in the interval 1–76 (MAVFEDVRDV…DVVNYIEKLG (76 aa)). S36 is subject to O-(pantetheine 4'-phosphoryl)serine.

Belongs to the acyl carrier protein (ACP) family. In terms of processing, 4'-phosphopantetheine is transferred from CoA to a specific serine of apo-ACP by AcpS. This modification is essential for activity because fatty acids are bound in thioester linkage to the sulfhydryl of the prosthetic group.

The protein localises to the cytoplasm. It functions in the pathway lipid metabolism; fatty acid biosynthesis. In terms of biological role, carrier of the growing fatty acid chain in fatty acid biosynthesis. The sequence is that of Acyl carrier protein from Campylobacter concisus (strain 13826).